A 143-amino-acid polypeptide reads, in one-letter code: Transcriptional regulator MraZ (143 aa).

SpoVT-AbrB domains are found at residues 5-47 (EYEH…PRSV) and 76-119 (AADM…APRR).

This sequence belongs to the MraZ family. As to quaternary structure, forms oligomers.

It localises to the cytoplasm. The protein resides in the nucleoid. The polypeptide is Transcriptional regulator MraZ (Roseiflexus sp. (strain RS-1)).